The following is a 638-amino-acid chain: Neuroendocrine convertase 2 (638 aa).

Positions 1–25 (MKGGCVSQWKAAAGFLFCVMVFASA) are cleaved as a signal peptide. Residues 26–109 (ERPVFTNHFL…QQEGFDRKKR (84 aa)) constitute a propeptide that is removed on maturation. The region spanning 129-453 (QWYLINTGQA…YGVLDAGAMV (325 aa)) is the Peptidase S8 domain. Residues Asp167 and His208 each act as charge relay system in the active site. 2 cysteine pairs are disulfide-bonded: Cys225–Cys376 and Cys317–Cys347. Asn375 is a glycosylation site (N-linked (GlcNAc...) asparagine). Ser384 acts as the Charge relay system in catalysis. Residues 461-597 (TVPERFHCVG…TLMLHGTQSA (137 aa)) form the P/Homo B domain. A disulfide bond links Cys468 and Cys494. 2 N-linked (GlcNAc...) asparagine glycosylation sites follow: Asn514 and Asn524.

It belongs to the peptidase S8 family. Furin subfamily.

It localises to the cytoplasmic vesicle. The protein resides in the secretory vesicle. It is found in the secreted. The catalysed reaction is Release of protein hormones and neuropeptides from their precursors, generally by hydrolysis of -Lys-Arg-|- bonds.. Serine endopeptidase which is involved in the processing of hormone and other protein precursors at sites comprised of pairs of basic amino acid residues. Responsible for the release of glucagon from proglucagon in pancreatic A cells. This is Neuroendocrine convertase 2 (PCSK2) from Pongo abelii (Sumatran orangutan).